Reading from the N-terminus, the 148-residue chain is Deoxyuridine 5'-triphosphate nucleotidohydrolase (148 aa).

Residues 68–70, N81, 85–87, and K95 each bind substrate; these read RSG and TID.

This sequence belongs to the dUTPase family. Mg(2+) is required as a cofactor.

It carries out the reaction dUTP + H2O = dUMP + diphosphate + H(+). It participates in pyrimidine metabolism; dUMP biosynthesis; dUMP from dCTP (dUTP route): step 2/2. This enzyme is involved in nucleotide metabolism: it produces dUMP, the immediate precursor of thymidine nucleotides and it decreases the intracellular concentration of dUTP so that uracil cannot be incorporated into DNA. This is Deoxyuridine 5'-triphosphate nucleotidohydrolase from Rickettsia conorii (strain ATCC VR-613 / Malish 7).